We begin with the raw amino-acid sequence, 506 residues long: GMP synthase [glutamine-hydrolyzing] (506 aa).

The Glutamine amidotransferase type-1 domain occupies 2-190; sequence SIVILDFGSQ…FLDICGVTRD (189 aa). The Nucleophile role is filled by Cys79. Catalysis depends on residues His165 and Glu167. The 191-residue stretch at 191 to 381 folds into the GMPS ATP-PPase domain; the sequence is WNAEHIVDEL…LGLPDHIRMR (191 aa). Residue 219-225 participates in ATP binding; sequence SGGVDSS.

As to quaternary structure, homodimer.

The catalysed reaction is XMP + L-glutamine + ATP + H2O = GMP + L-glutamate + AMP + diphosphate + 2 H(+). It participates in purine metabolism; GMP biosynthesis; GMP from XMP (L-Gln route): step 1/1. In terms of biological role, catalyzes the synthesis of GMP from XMP. The sequence is that of GMP synthase [glutamine-hydrolyzing] (guaA) from Deinococcus radiodurans (strain ATCC 13939 / DSM 20539 / JCM 16871 / CCUG 27074 / LMG 4051 / NBRC 15346 / NCIMB 9279 / VKM B-1422 / R1).